A 300-amino-acid chain; its full sequence is Zinc finger protein 705B (300 aa).

One can recognise a KRAB domain in the interval 7–78 (VTFEDVAIDF…GRVFLQDQNP (72 aa)). 3 consecutive C2H2-type zinc fingers follow at residues 172–194 (YQCN…KMTH), 200–222 (YACH…EKTH), and 228–250 (YKCH…ERTH). Residues 256 to 278 (YECDKSGKAFSQSSGFRGNKIIH) form a C2H2-type 4; degenerate zinc finger.

Belongs to the krueppel C2H2-type zinc-finger protein family.

The protein resides in the nucleus. May be involved in transcriptional regulation. The protein is Zinc finger protein 705B (ZNF705B) of Homo sapiens (Human).